Here is a 75-residue protein sequence, read N- to C-terminus: Guanine nucleotide-binding protein G(I)/G(S)/G(O) subunit gamma-4 (75 aa).

A Cysteine methyl ester modification is found at cysteine 72. Cysteine 72 carries S-geranylgeranyl cysteine lipidation. The propeptide at 73-75 (TIL) is removed in mature form.

It belongs to the G protein gamma family. As to quaternary structure, g proteins are composed of 3 units, alpha, beta and gamma. Interacts with beta-1 and beta-2, but not with beta-3. Interacts with KCNK1. Interacts (via C-terminus) with KCNK2/TREK-1 (via N-terminus); this interaction confers ion selectivity to Cl(-) and L-glutamate. As to expression, brain.

The protein localises to the cell membrane. In terms of biological role, guanine nucleotide-binding proteins (G proteins) are involved as a modulator or transducer in various transmembrane signaling systems. The beta and gamma chains are required for the GTPase activity, for replacement of GDP by GTP, and for G protein-effector interaction. This Mus musculus (Mouse) protein is Guanine nucleotide-binding protein G(I)/G(S)/G(O) subunit gamma-4 (Gng4).